The primary structure comprises 968 residues: RNA polymerase-associated protein RapA (968 aa).

The region spanning 164–334 (EVGQRHAPRV…FARLRLLDPD (171 aa)) is the Helicase ATP-binding domain. 177-184 (DEVGLGKT) lines the ATP pocket. A DEAH box motif is present at residues 280–283 (DEAH). The 155-residue stretch at 490–644 (RVEWLLNYLV…TCPTGRTIYD (155 aa)) folds into the Helicase C-terminal domain.

The protein belongs to the SNF2/RAD54 helicase family. RapA subfamily. Interacts with the RNAP. Has a higher affinity for the core RNAP than for the holoenzyme. Its ATPase activity is stimulated by binding to RNAP.

Functionally, transcription regulator that activates transcription by stimulating RNA polymerase (RNAP) recycling in case of stress conditions such as supercoiled DNA or high salt concentrations. Probably acts by releasing the RNAP, when it is trapped or immobilized on tightly supercoiled DNA. Does not activate transcription on linear DNA. Probably not involved in DNA repair. In Yersinia pestis bv. Antiqua (strain Antiqua), this protein is RNA polymerase-associated protein RapA.